A 402-amino-acid polypeptide reads, in one-letter code: 3-dehydroquinate synthase (402 aa).

The protein belongs to the archaeal-type DHQ synthase family.

It catalyses the reaction 2-amino-2,3,7-trideoxy-D-lyxo-hept-6-ulosonate + NAD(+) + H2O = 3-dehydroquinate + NH4(+) + NADH + H(+). Its function is as follows. Catalyzes the oxidative deamination and cyclization of 2-amino-3,7-dideoxy-D-threo-hept-6-ulosonic acid (ADH) to yield 3-dehydroquinate (DHQ), which is fed into the canonical shikimic pathway of aromatic amino acid biosynthesis. The chain is 3-dehydroquinate synthase from Methanopyrus kandleri (strain AV19 / DSM 6324 / JCM 9639 / NBRC 100938).